The following is a 423-amino-acid chain: Serine incorporator 5 (423 aa).

Residues 1–36 (MSAQCCAGQLACCCGSAGCSLCCDCCPRIRQSLSTR) are Extracellular-facing. The helical transmembrane segment at 37–57 (FMYALYFILVVVLCCIMMSTT) threads the bilayer. Residues 58 to 89 (VAHKMKEHIPFFEDMCKGIKAGDTCEKLVGYS) are Cytoplasmic-facing. The helical transmembrane segment at 90–110 (AVYRVCFGMACFFFIFCLLTL) threads the bilayer. At 111–124 (KINNSKSCRAHIHN) the chain is on the extracellular side. N-linked (GlcNAc...) asparagine glycosylation occurs at Asn113. Residues 125–145 (GFWFFKLLLLGAMCSGAFFIP) form a helical membrane-spanning segment. The Cytoplasmic segment spans residues 146–156 (DQDTFLNAWRY). The chain crosses the membrane as a helical span at residues 157 to 177 (VGAVGGFLFIGIQLLLLVEFA). Over 178-198 (HKWNKNWTAGTASNKLWYASL) the chain is Extracellular. N-linked (GlcNAc...) asparagine glycosylation occurs at Asn183. The helical transmembrane segment at 199 to 219 (ALVTLIMYSIATGGLVLMAVF) threads the bilayer. At 220–230 (YTQKDSCMENK) the chain is on the cytoplasmic side. The helical transmembrane segment at 231–251 (ILLGVNGGLCLLISLVAISPW) threads the bilayer. Over 252–258 (VQNRQPH) the chain is Extracellular. A helical membrane pass occupies residues 259–279 (SGLLQSGVISCYVTYLTFSAL). The Cytoplasmic portion of the chain corresponds to 280–311 (SSKPAEVVLDEHGKNVTICVPDFGQDLYRDEN). Residues 312–332 (LVTILGTSLLIGCILYSCLTS) traverse the membrane as a helical segment. At 333–385 (TTRSSSDALQGRYAAPELEIARCCFCFSPGGEDTEEQQPGKEGPRVIYDEKKG) the chain is on the extracellular side. The chain crosses the membrane as a helical span at residues 386–406 (TVYIYSYFHFVFFLASLYVMM). Over 407–423 (TVTNWFNHVRSAFHLLP) the chain is Cytoplasmic.

This sequence belongs to the TDE1 family. Highly expressed in placenta, skeletal muscle, spleen, thymus, testis and peripheral leukocyte and is expressed weakly in the heart, liver and fetal brain.

It is found in the cell membrane. Its subcellular location is the cytoplasm. It localises to the perinuclear region. The enzyme catalyses a 1,2-diacyl-sn-glycero-3-phospho-L-serine(in) = a 1,2-diacyl-sn-glycero-3-phospho-L-serine(out). It carries out the reaction a 1,2-diacyl-sn-glycero-3-phosphocholine(in) = a 1,2-diacyl-sn-glycero-3-phosphocholine(out). It catalyses the reaction a 1,2-diacyl-sn-glycero-3-phosphoethanolamine(in) = a 1,2-diacyl-sn-glycero-3-phosphoethanolamine(out). Its function is as follows. Restriction factor required to restrict infectivity of lentiviruses, such as HIV-1: acts by inhibiting an early step of viral infection. Impairs the penetration of the viral particle into the cytoplasm. Non-ATP-dependent, non-specific lipid transporter for phosphatidylserine, phosphatidylcholine, and phosphatidylethanolamine. Functions as a scramblase that flips lipids in both directions across the membrane. Phospholipid scrambling results in HIV-1 surface exposure of phosphatidylserine and loss of membrane asymmetry, which leads to changes in HIV-1 Env conformation and loss of infectivity. Enhances the incorporation of serine into phosphatidylserine and sphingolipids. May play a role in providing serine molecules for the formation of myelin glycosphingolipids in oligodendrocytes. The sequence is that of Serine incorporator 5 from Homo sapiens (Human).